We begin with the raw amino-acid sequence, 174 residues long: Caltractin ICL1e (174 aa).

A disordered region spans residues 1–33 (MSKKQQAPVAQKPVGKQQQVNRKPQDRPGLTED). 4 EF-hand domains span residues 33 to 68 (DEIE…LGFD), 88 to 103 (IDFD…KLGN), 105 to 140 (ESRD…LGET), and 141 to 174 (MTAE…KRTF).

This sequence belongs to the centrin family. Monomer.

Its subcellular location is the cytoplasm. The protein resides in the cytoskeleton. Functionally, plays a fundamental role in microtubule organizing center structure and function. Component of the infraciliary lattice (ICL) and the ciliary basal bodies. This chain is Caltractin ICL1e (Icl1e), found in Paramecium tetraurelia.